Reading from the N-terminus, the 168-residue chain is 3'-5' exoribonuclease MT2234.1 (168 aa).

Asp6 contacts Mg(2+). An RNA binding region spans residues Asp6–Phe9.

As to quaternary structure, homodimer. Requires Mg(2+) as cofactor.

Its function is as follows. Exonuclease that cleaves single-stranded 3' overhangs of double-stranded RNA. The protein is 3'-5' exoribonuclease MT2234.1 of Mycobacterium tuberculosis (strain CDC 1551 / Oshkosh).